The sequence spans 589 residues: ATP-dependent lipid A-core flippase (589 aa).

The next 5 membrane-spanning stretches (helical) occupy residues 29–49 (LLLV…TGFL), 70–90 (WLPV…YITD), 157–177 (VIGA…TILV), 261–281 (MIGA…ALAG), and 283–303 (LTAG…PGLK). An ABC transmembrane type-1 domain is found at 32-314 (VAALIAALIE…LTNVQNMVQR (283 aa)). The ABC transporter domain occupies 346–582 (IEFRDVTARY…GGLYSHLHGM (237 aa)). 380–387 (GRSGSGKS) contributes to the ATP binding site.

Belongs to the ABC transporter superfamily. Lipid exporter (TC 3.A.1.106) family. Homodimer.

It is found in the cell inner membrane. The catalysed reaction is ATP + H2O + lipid A-core oligosaccharideSide 1 = ADP + phosphate + lipid A-core oligosaccharideSide 2.. In terms of biological role, involved in lipopolysaccharide (LPS) biosynthesis. Translocates lipid A-core from the inner to the outer leaflet of the inner membrane. Transmembrane domains (TMD) form a pore in the inner membrane and the ATP-binding domain (NBD) is responsible for energy generation. The polypeptide is ATP-dependent lipid A-core flippase (Xanthomonas oryzae pv. oryzae (strain MAFF 311018)).